The following is an 88-amino-acid chain: Small ribosomal subunit protein bS20 (88 aa).

Residues 1–27 are disordered; the sequence is MANTASAKKMTRKIAKRTAINRSRRSR.

The protein belongs to the bacterial ribosomal protein bS20 family.

In terms of biological role, binds directly to 16S ribosomal RNA. The sequence is that of Small ribosomal subunit protein bS20 from Methylobacterium radiotolerans (strain ATCC 27329 / DSM 1819 / JCM 2831 / NBRC 15690 / NCIMB 10815 / 0-1).